Here is a 251-residue protein sequence, read N- to C-terminus: Triosephosphate isomerase (251 aa).

9–11 is a binding site for substrate; sequence NWK. The active-site Electrophile is His95. Glu167 serves as the catalytic Proton acceptor. Substrate contacts are provided by residues Gly173, Ser213, and 234 to 235; that span reads GG. Ser213 carries the phosphoserine modification.

Belongs to the triosephosphate isomerase family. As to quaternary structure, homodimer.

The protein localises to the cytoplasm. It catalyses the reaction D-glyceraldehyde 3-phosphate = dihydroxyacetone phosphate. Its pathway is carbohydrate biosynthesis; gluconeogenesis. It functions in the pathway carbohydrate degradation; glycolysis; D-glyceraldehyde 3-phosphate from glycerone phosphate: step 1/1. Its function is as follows. Involved in the gluconeogenesis. Catalyzes stereospecifically the conversion of dihydroxyacetone phosphate (DHAP) to D-glyceraldehyde-3-phosphate (G3P). This Bacillus cereus (strain G9842) protein is Triosephosphate isomerase.